The following is a 95-amino-acid chain: Small ribosomal subunit protein bS20c (95 aa).

It belongs to the bacterial ribosomal protein bS20 family.

Its subcellular location is the plastid. The protein localises to the cyanelle. In terms of biological role, binds directly to 16S ribosomal RNA. The protein is Small ribosomal subunit protein bS20c (rps20) of Cyanophora paradoxa.